The chain runs to 626 residues: Basic helix-loop-helix ARNT-like protein 1 (626 aa).

The interval 1-58 (MADQRMDISSTISDFMSPGPTDLLSSSLGTSGVDCNRKRKGSATDYQESMDTDKDDPH) is disordered. Phosphoserine; by GSK3-beta is present on S17. Over residues 17 to 32 (SPGPTDLLSSSLGTSG) the composition is skewed to low complexity. T21 is modified (phosphothreonine; by GSK3-beta). Residues 36–41 (NRKRKG) carry the Nuclear localization signal motif. Positions 72–125 (NAREAHSQIEKRRRDKMNSFIDELASLVPTCNAMSRKLDKLTVLRMAVQHMKTL) constitute a bHLH domain. Residue S78 is modified to Phosphoserine. S90 bears the Phosphoserine; by CK2 mark. The Nuclear export signal 1 signature appears at 142 to 152 (LSDDELKHLIL). The region spanning 143 to 215 (SDDELKHLIL…EQLSSSDTAP (73 aa)) is the PAS 1 domain. K252 is covalently cross-linked (Glycyl lysine isopeptide (Lys-Gly) (interchain with G-Cter in SUMO2 and SUMO3)). K259 is covalently cross-linked (Glycyl lysine isopeptide (Lys-Gly) (interchain with G-Cter in SUMO); alternate). K259 participates in a covalent cross-link: Glycyl lysine isopeptide (Lys-Gly) (interchain with G-Cter in SUMO2); alternate. Residues 326-396 (PQPVNGEIRV…ECHRQVLQTR (71 aa)) enclose the PAS 2 domain. The short motif at 361 to 369 (LAYLPQELL) is the Nuclear export signal 2 element. A PAC domain is found at 401–444 (TNCYKFKIKDGSFITLRSRWFSFMNPWTKEVEYIVSTNTVVLAN). 2 disordered regions span residues 459–492 (SPHSMDSMLPSGEGGPKRTHPTVPGIPGGTRAGA) and 511–595 (GSSP…SPSN). Residues 508 to 588 (RIRGSSPSSC…IGIDMIDNDQ (81 aa)) are interaction with CIART. Over residues 511-521 (GSSPSSCGSSP) the composition is skewed to low complexity. K538 carries the N6-acetyllysine modification.

In terms of assembly, component of the circadian clock oscillator which includes the CRY1/2 proteins, CLOCK or NPAS2, BMAL1 or BMAL2, CSNK1D and/or CSNK1E, TIMELESS and the PER1/2/3 proteins. Forms a heterodimer with CLOCK. The CLOCK-BMAL1 heterodimer is required for E-box-dependent transactivation, for CLOCK nuclear translocation and degradation, and, for phosphorylation of both CLOCK and BMAL1. Part of a nuclear complex which also includes RACK1 and PRKCA; RACK1 and PRKCA are recruited to the complex in a circadian manner. Interacts with NPAS2. Interacts with EZH2. Interacts with SUMO3. Interacts with SIRT1. Interacts with AHR. Interacts with ID1, ID2 and ID3. Interacts with DDX4. Interacts with OGT. Interacts with EED and SUZ12. Interacts with MTA1. Interacts with CIART. Interacts with HSP90. Interacts with KAT2B and EP300. Interacts with BHLHE40/DEC1 and BHLHE41/DEC2. Interacts with RELB and the interaction is enhanced in the presence of CLOCK. Interacts with PER1, PER2, CRY1 and CRY2 and this interaction requires a translocation to the nucleus. Interaction of the CLOCK-BMAL1 heterodimer with PER or CRY inhibits transcription activation. Interaction of the CLOCK-BMAL1 with CRY1 is independent of DNA but with PER2 is off DNA. The CLOCK-BMAL1 heterodimer interacts with GSK3B. Interacts with KDM5A. Interacts with KMT2A; in a circadian manner. Interacts with UBE3A. Interacts with PRKCG. Interacts with MAGEL2. Interacts with NCOA2. Interacts with THRAP3. The CLOCK-BMAL1 heterodimer interacts with PASD1. Interacts with PASD1. Interacts with USP9X. Interacts with PIWIL2 (via PIWI domain). Interacts with HDAC3. Interacts with HNF4A. In terms of processing, ubiquitinated, leading to its proteasomal degradation. Deubiquitinated by USP9X. O-glycosylated; contains O-GlcNAc. O-glycosylation by OGT prevents protein degradation by inhibiting ubiquitination. It also stabilizes the CLOCK-BMAL1 heterodimer thereby increasing CLOCK-BMAL1-mediated transcription of genes in the negative loop of the circadian clock such as PER1/2/3 and CRY1/2. Post-translationally, acetylated on Lys-538 by CLOCK during the repression phase of the circadian cycle. Acetylation facilitates recruitment of CRY1 protein and initiates the repression phase of the circadian cycle. Acetylated at Lys-538 by KAT5 during the activation phase of the cycle, leading to recruitment of the positive transcription elongation factor b (P-TEFb) and BRD4, followed by productive elongation of circadian transcripts. Deacetylated by SIRT1, which may result in decreased protein stability. In terms of processing, phosphorylated upon dimerization with CLOCK. Phosphorylation enhances the transcriptional activity, alters the subcellular localization and decreases the stability of the CLOCK-BMAL1 heterodimer by promoting its degradation. Phosphorylation shows circadian variations in the liver with a peak between CT10 to CT14. Phosphorylation at Ser-90 by CK2 is essential for its nuclear localization, its interaction with CLOCK and controls CLOCK nuclear entry. Dephosphorylation at Ser-78 is important for dimerization with CLOCK and transcriptional activity. Sumoylated on Lys-259 upon dimerization with CLOCK. Predominantly conjugated to poly-SUMO2/3 rather than SUMO1 and the level of these conjugates undergo rhythmic variation, peaking at CT9-CT12. Sumoylation localizes it exclusively to the PML body and promotes its ubiquitination in the PML body, ubiquitin-dependent proteasomal degradation and the transcriptional activity of the CLOCK-BMAL1 heterodimer. Post-translationally, undergoes lysosome-mediated degradation in a time-dependent manner in the liver.

The protein resides in the nucleus. It localises to the cytoplasm. Its subcellular location is the PML body. In terms of biological role, transcriptional activator which forms a core component of the circadian clock. The circadian clock, an internal time-keeping system, regulates various physiological processes through the generation of approximately 24 hour circadian rhythms in gene expression, which are translated into rhythms in metabolism and behavior. It is derived from the Latin roots 'circa' (about) and 'diem' (day) and acts as an important regulator of a wide array of physiological functions including metabolism, sleep, body temperature, blood pressure, endocrine, immune, cardiovascular, and renal function. Consists of two major components: the central clock, residing in the suprachiasmatic nucleus (SCN) of the brain, and the peripheral clocks that are present in nearly every tissue and organ system. Both the central and peripheral clocks can be reset by environmental cues, also known as Zeitgebers (German for 'timegivers'). The predominant Zeitgeber for the central clock is light, which is sensed by retina and signals directly to the SCN. The central clock entrains the peripheral clocks through neuronal and hormonal signals, body temperature and feeding-related cues, aligning all clocks with the external light/dark cycle. Circadian rhythms allow an organism to achieve temporal homeostasis with its environment at the molecular level by regulating gene expression to create a peak of protein expression once every 24 hours to control when a particular physiological process is most active with respect to the solar day. Transcription and translation of core clock components (CLOCK, NPAS2, BMAL1, BMAL2, PER1, PER2, PER3, CRY1 and CRY2) plays a critical role in rhythm generation, whereas delays imposed by post-translational modifications (PTMs) are important for determining the period (tau) of the rhythms (tau refers to the period of a rhythm and is the length, in time, of one complete cycle). A diurnal rhythm is synchronized with the day/night cycle, while the ultradian and infradian rhythms have a period shorter and longer than 24 hours, respectively. Disruptions in the circadian rhythms contribute to the pathology of cardiovascular diseases, cancer, metabolic syndromes and aging. A transcription/translation feedback loop (TTFL) forms the core of the molecular circadian clock mechanism. Transcription factors, CLOCK or NPAS2 and BMAL1 or BMAL2, form the positive limb of the feedback loop, act in the form of a heterodimer and activate the transcription of core clock genes and clock-controlled genes (involved in key metabolic processes), harboring E-box elements (5'-CACGTG-3') within their promoters. The core clock genes: PER1/2/3 and CRY1/2 which are transcriptional repressors form the negative limb of the feedback loop and interact with the CLOCK|NPAS2-BMAL1|BMAL2 heterodimer inhibiting its activity and thereby negatively regulating their own expression. This heterodimer also activates nuclear receptors NR1D1/2 and RORA/B/G, which form a second feedback loop and which activate and repress BMAL1 transcription, respectively. BMAL1 positively regulates myogenesis and negatively regulates adipogenesis via the transcriptional control of the genes of the canonical Wnt signaling pathway. Plays a role in normal pancreatic beta-cell function; regulates glucose-stimulated insulin secretion via the regulation of antioxidant genes NFE2L2/NRF2 and its targets SESN2, PRDX3, CCLC and CCLM. Negatively regulates the mTORC1 signaling pathway; regulates the expression of MTOR and DEPTOR. Controls diurnal oscillations of Ly6C inflammatory monocytes; rhythmic recruitment of the PRC2 complex imparts diurnal variation to chemokine expression that is necessary to sustain Ly6C monocyte rhythms. Regulates the expression of HSD3B2, STAR, PTGS2, CYP11A1, CYP19A1 and LHCGR in the ovary and also the genes involved in hair growth. Plays an important role in adult hippocampal neurogenesis by regulating the timely entry of neural stem/progenitor cells (NSPCs) into the cell cycle and the number of cell divisions that take place prior to cell-cycle exit. Regulates the circadian expression of CIART and KLF11. The CLOCK-BMAL1 heterodimer regulates the circadian expression of SERPINE1/PAI1, VWF, B3, CCRN4L/NOC, NAMPT, DBP, MYOD1, PPARGC1A, PPARGC1B, SIRT1, GYS2, F7, NGFR, GNRHR, BHLHE40/DEC1, ATF4, MTA1, KLF10 and also genes implicated in glucose and lipid metabolism. Promotes rhythmic chromatin opening, regulating the DNA accessibility of other transcription factors. The NPAS2-BMAL1 heterodimer positively regulates the expression of MAOA, F7 and LDHA and modulates the circadian rhythm of daytime contrast sensitivity by regulating the rhythmic expression of adenylate cyclase type 1 (ADCY1) in the retina. The preferred binding motif for the CLOCK-BMAL1 heterodimer is 5'-CACGTGA-3', which contains a flanking adenine nucleotide at the 3-prime end of the canonical 6-nucleotide E-box sequence. CLOCK specifically binds to the half-site 5'-CAC-3', while BMAL1 binds to the half-site 5'-GTGA-3'. The CLOCK-BMAL1 heterodimer also recognizes the non-canonical E-box motifs 5'-AACGTGA-3' and 5'-CATGTGA-3'. Essential for the rhythmic interaction of CLOCK with ASS1 and plays a critical role in positively regulating CLOCK-mediated acetylation of ASS1. Plays a role in protecting against lethal sepsis by limiting the expression of immune checkpoint protein CD274 in macrophages in a PKM2-dependent manner. Regulates the diurnal rhythms of skeletal muscle metabolism via transcriptional activation of genes promoting triglyceride synthesis (DGAT2) and metabolic efficiency (COQ10B). This chain is Basic helix-loop-helix ARNT-like protein 1 (BMAL1), found in Mesocricetus auratus (Golden hamster).